Here is a 164-residue protein sequence, read N- to C-terminus: Putative 4-hydroxy-4-methyl-2-oxoglutarate aldolase (164 aa).

Substrate is bound by residues 74 to 77 and arginine 96; that span reads GGNL. Aspartate 97 provides a ligand contact to a divalent metal cation.

Belongs to the class II aldolase/RraA-like family. In terms of assembly, homotrimer. It depends on a divalent metal cation as a cofactor.

The catalysed reaction is 4-hydroxy-4-methyl-2-oxoglutarate = 2 pyruvate. It carries out the reaction oxaloacetate + H(+) = pyruvate + CO2. Its function is as follows. Catalyzes the aldol cleavage of 4-hydroxy-4-methyl-2-oxoglutarate (HMG) into 2 molecules of pyruvate. Also contains a secondary oxaloacetate (OAA) decarboxylase activity due to the common pyruvate enolate transition state formed following C-C bond cleavage in the retro-aldol and decarboxylation reactions. The sequence is that of Putative 4-hydroxy-4-methyl-2-oxoglutarate aldolase from Thermus thermophilus (strain ATCC BAA-163 / DSM 7039 / HB27).